The primary structure comprises 485 residues: GlcNAc-binding protein A (485 aa).

The first 29 residues, M1–A29, serve as a signal peptide directing secretion. Residues V30–F200 enclose the Chitin-binding type-4 domain. Positions A437–W478 constitute a Chitin-binding type-3 domain.

Belongs to the GbpA family.

The protein localises to the secreted. In terms of biological role, probably interacts with GlcNAc residues. May promote attachment to both epithelial cell surfaces and chitin. In Vibrio vulnificus (strain YJ016), this protein is GlcNAc-binding protein A.